The sequence spans 216 residues: Potassium-transporting ATPase KdpC subunit (216 aa).

The helical transmembrane segment at 12–32 (LLGVSLLVFGLLYQGSLMAIG) threads the bilayer. A compositionally biased stretch (polar residues) spans 197-207 (QNETDQNSDMN). Residues 197–216 (QNETDQNSDMNASEIANGDH) form a disordered region.

Belongs to the KdpC family. As to quaternary structure, the system is composed of three essential subunits: KdpA, KdpB and KdpC. The complex also contains KdpF, a small non-essential subunit.

The protein resides in the cell membrane. Functionally, part of the high-affinity ATP-driven potassium transport (or Kdp) system, which catalyzes the hydrolysis of ATP coupled with the electrogenic transport of potassium into the cytoplasm. This subunit acts as a catalytic chaperone that increases the ATP-binding affinity of the ATP-hydrolyzing subunit KdpB by the formation of a transient KdpB/KdpC/ATP ternary complex. The Kdp system is essential for growth under K(+) limitation, and for survival under desiccation and salt crystal inclusion. The sequence is that of Potassium-transporting ATPase KdpC subunit from Halobacterium salinarum (strain ATCC 29341 / DSM 671 / R1).